A 198-amino-acid chain; its full sequence is Pyridoxal 5'-phosphate synthase subunit PdxT (198 aa).

49–51 (GES) provides a ligand contact to L-glutamine. The active-site Nucleophile is Cys81. L-glutamine contacts are provided by residues Arg113 and 141 to 142 (IR). Catalysis depends on charge relay system residues His177 and Glu179.

Belongs to the glutaminase PdxT/SNO family. In terms of assembly, in the presence of PdxS, forms a dodecamer of heterodimers. Only shows activity in the heterodimer.

The catalysed reaction is aldehydo-D-ribose 5-phosphate + D-glyceraldehyde 3-phosphate + L-glutamine = pyridoxal 5'-phosphate + L-glutamate + phosphate + 3 H2O + H(+). It catalyses the reaction L-glutamine + H2O = L-glutamate + NH4(+). It participates in cofactor biosynthesis; pyridoxal 5'-phosphate biosynthesis. Catalyzes the hydrolysis of glutamine to glutamate and ammonia as part of the biosynthesis of pyridoxal 5'-phosphate. The resulting ammonia molecule is channeled to the active site of PdxS. The protein is Pyridoxal 5'-phosphate synthase subunit PdxT of Mycobacterium leprae (strain TN).